The primary structure comprises 65 residues: Sulfur carrier protein TtuB (65 aa).

1-thioglycine; alternate is present on Gly65. Gly65 bears the Glycyl adenylate; alternate mark. Gly65 participates in a covalent cross-link: Glycyl cysteine thioester (Gly-Cys) (interchain with C-192 in TtuC); alternate. Gly65 participates in a covalent cross-link: Glycyl lysine isopeptide (Gly-Lys) (interchain with K-? in acceptor proteins); alternate.

Belongs to the TtuB family. As to quaternary structure, is able to form a heterocomplex with TtuA. In terms of processing, the C-terminal glycine residue of TtuB is first activated by TtuC as an acyl-adenylate (TtuB-COAMP), and then converted to the thiocarboxylate form (TtuB-COSH) by the cysteine desulfurases IscS or SufS.

Its pathway is tRNA modification. Functionally, required for the 2-thiolation of 5-methyluridine residue at position 54 in the T loop of tRNAs, leading to 5-methyl-2-thiouridine (m(5)s(2)U or s(2)T). This modification allows thermal stabilization of tRNAs in thermophilic microorganisms, and is essential for cell growth at high temperatures. Thiocarboxylated TtuB functions as the sulfur donor in the sulfurtransferase reaction catalyzed by TtuA. TtuB also functions as a protein modifier covalently attached to lysine residues of the target proteins TtuA and TtuC. TtuB conjugation might play a regulatory role to ensure appropriate sulfur transfer in cells. In Thermus thermophilus (strain ATCC BAA-163 / DSM 7039 / HB27), this protein is Sulfur carrier protein TtuB.